The following is a 370-amino-acid chain: Protein DUF642 L-GALACTONO-1,4-LACTONE-RESPONSIVE GENE 1 (370 aa).

Positions 1–22 are cleaved as a signal peptide; sequence MMYQEAALLLALLFISSNVVLS. The N-linked (GlcNAc...) asparagine glycan is linked to Asn124.

As to expression, expressed at low levels in roots, seedlings and leaves.

It localises to the secreted. It is found in the cell wall. The sequence is that of Protein DUF642 L-GALACTONO-1,4-LACTONE-RESPONSIVE GENE 1 from Arabidopsis thaliana (Mouse-ear cress).